The chain runs to 101 residues: MIPGELLIDDGEHELNAGRATVTVVVSNTGDRPVQIGSHYHFYEVNEALAFDREAARGFRLNIAAGTAVRFEPGQERTVELVELAGERIVYGFNGKVMGKL.

It belongs to the urease beta subunit family. Heterotrimer of UreA (gamma), UreB (beta) and UreC (alpha) subunits. Three heterotrimers associate to form the active enzyme.

It is found in the cytoplasm. The enzyme catalyses urea + 2 H2O + H(+) = hydrogencarbonate + 2 NH4(+). It participates in nitrogen metabolism; urea degradation; CO(2) and NH(3) from urea (urease route): step 1/1. In Paraburkholderia phytofirmans (strain DSM 17436 / LMG 22146 / PsJN) (Burkholderia phytofirmans), this protein is Urease subunit beta.